We begin with the raw amino-acid sequence, 240 residues long: Seed lectin (240 aa).

Residue Asn111 is glycosylated (N-linked (GlcNAc...) asparagine). Mn(2+) is bound by residues Glu123 and Asp125. Ca(2+)-binding residues include Asp125, Asn129, and Asp132. Residues Asp132 and His137 each coordinate Mn(2+). An N-linked (GlcNAc...) asparagine glycan is attached at Asn183.

It belongs to the leguminous lectin family. As to quaternary structure, homotetramer. Partially N-glycosylated at Asn-111 and Asn-183 with the heptasaccharide [(beta-xylosyl-1,2)(alpha-mannosyl-1,6)(alpha-mannosyl-1,3)]beta-manosyl-1,4-GlcNAC-beta-1,4-GlcNAc-beta-1,4 [alpha-fucosyl-1,3]GlcNAc. A small proportion of alpha chains are proteolytically cleaved at 114-115 into gamma and beta chains. This is probably dependent on the deglycosylation of Asn-111. Seed.

Its function is as follows. Lectin that binds galactose. This chain is Seed lectin, found in Vatairea macrocarpa.